Here is a 289-residue protein sequence, read N- to C-terminus: Phosphoribulokinase (289 aa).

12–20 (GSSGAGTTT) serves as a coordination point for ATP.

Belongs to the phosphoribulokinase family.

The catalysed reaction is D-ribulose 5-phosphate + ATP = D-ribulose 1,5-bisphosphate + ADP + H(+). Its pathway is carbohydrate biosynthesis; Calvin cycle. In Rhizobium meliloti (strain 1021) (Ensifer meliloti), this protein is Phosphoribulokinase (cbbP).